The sequence spans 230 residues: Large ribosomal subunit protein uL3 (230 aa).

Disordered regions lie at residues 125-149 (QAIGPRSHGGGGGSKPIRQTGSLGD) and 210-230 (PNPKNPVSLFVPNSDKEVKNE).

Belongs to the universal ribosomal protein uL3 family. As to quaternary structure, part of the 50S ribosomal subunit. Forms a cluster with proteins L14 and L19.

One of the primary rRNA binding proteins, it binds directly near the 3'-end of the 23S rRNA, where it nucleates assembly of the 50S subunit. The protein is Large ribosomal subunit protein uL3 of Mesomycoplasma hyopneumoniae (strain 232) (Mycoplasma hyopneumoniae).